A 1152-amino-acid chain; its full sequence is Alpha-mannosidase 2x (1152 aa).

Residues Met1 to Lys5 are Cytoplasmic-facing. A helical; Signal-anchor for type II membrane protein membrane pass occupies residues Gln6 to Leu26. At Asp27–Glu796 the chain is on the lumenal side. The stretch at Pro43–Ser74 forms a coiled coil. Zn(2+)-binding residues include His175 and Asp177. Asn225 carries N-linked (GlcNAc...) asparagine glycosylation. Residue Asp289 participates in Zn(2+) binding. The active-site Nucleophile is Asp289. An N-linked (GlcNAc...) asparagine glycan is attached at Asn305. Zn(2+) is bound at residue His569.

This sequence belongs to the glycosyl hydrolase 38 family. Homodimer; disulfide-linked. Interacts with MGAT4D. It depends on Zn(2+) as a cofactor.

It localises to the golgi apparatus membrane. The catalysed reaction is N(4)-{beta-D-GlcNAc-(1-&gt;2)-alpha-D-Man-(1-&gt;3)-[alpha-D-Man-(1-&gt;3)-[alpha-D-Man-(1-&gt;6)]-alpha-D-Man-(1-&gt;6)]-beta-D-Man-(1-&gt;4)-beta-D-GlcNAc-(1-&gt;4)-beta-D-GlcNAc}-L-asparaginyl-[protein] + 2 H2O = 2 alpha-D-mannopyranose + an N(4)-{beta-D-GlcNAc-(1-&gt;2)-alpha-D-Man-(1-&gt;3)-[alpha-D-Man-(1-&gt;6)]-beta-D-Man-(1-&gt;4)-beta-D-GlcNAc-(1-&gt;4)-beta-D-GlcNAc}-L-asparaginyl-[protein]. It participates in protein modification; protein glycosylation. In terms of biological role, catalyzes the first committed step in the biosynthesis of complex N-glycans. It controls conversion of high mannose to complex N-glycans; the final hydrolytic step in the N-glycan maturation pathway. This Mus musculus (Mouse) protein is Alpha-mannosidase 2x (Man2a2).